A 250-amino-acid chain; its full sequence is 1-acyl-sn-glycerol-3-phosphate acyltransferase (250 aa).

An HXXXXD motif motif is present at residues 88 to 93 (HIAAMD).

This sequence belongs to the 1-acyl-sn-glycerol-3-phosphate acyltransferase family.

The catalysed reaction is a 1-acyl-sn-glycero-3-phosphate + an acyl-CoA = a 1,2-diacyl-sn-glycero-3-phosphate + CoA. It participates in phospholipid metabolism; CDP-diacylglycerol biosynthesis; CDP-diacylglycerol from sn-glycerol 3-phosphate: step 2/3. In terms of biological role, converts lysophosphatidic acid (LPA) into phosphatidic acid by incorporating acyl moiety at the 2 position. This Borreliella burgdorferi (strain ATCC 35210 / DSM 4680 / CIP 102532 / B31) (Borrelia burgdorferi) protein is 1-acyl-sn-glycerol-3-phosphate acyltransferase (plsC).